The sequence spans 395 residues: NAD(P)H-quinone oxidoreductase subunit H, chloroplastic (395 aa).

Belongs to the complex I 49 kDa subunit family. NDH is composed of at least 16 different subunits, 5 of which are encoded in the nucleus.

The protein resides in the plastid. It is found in the chloroplast thylakoid membrane. The catalysed reaction is a plastoquinone + NADH + (n+1) H(+)(in) = a plastoquinol + NAD(+) + n H(+)(out). It carries out the reaction a plastoquinone + NADPH + (n+1) H(+)(in) = a plastoquinol + NADP(+) + n H(+)(out). NDH shuttles electrons from NAD(P)H:plastoquinone, via FMN and iron-sulfur (Fe-S) centers, to quinones in the photosynthetic chain and possibly in a chloroplast respiratory chain. The immediate electron acceptor for the enzyme in this species is believed to be plastoquinone. Couples the redox reaction to proton translocation, and thus conserves the redox energy in a proton gradient. The polypeptide is NAD(P)H-quinone oxidoreductase subunit H, chloroplastic (Citrus sinensis (Sweet orange)).